The primary structure comprises 1003 residues: Putative non-structural protein 4 (1003 aa).

The sequence is that of Putative non-structural protein 4 (S4) from Aedes pseudoscutellaris (Mosquito).